The following is a 328-amino-acid chain: Glycerol-3-phosphate dehydrogenase [NAD(P)+] (328 aa).

Residues Trp-11, Arg-30, and Lys-103 each contribute to the NADPH site. 3 residues coordinate sn-glycerol 3-phosphate: Lys-103, Gly-132, and Ser-134. Residue Ala-136 coordinates NADPH. Sn-glycerol 3-phosphate contacts are provided by Lys-187, Asp-240, Ser-250, Arg-251, and Asn-252. Lys-187 (proton acceptor) is an active-site residue. Position 251 (Arg-251) interacts with NADPH. 2 residues coordinate NADPH: Val-275 and Glu-277.

This sequence belongs to the NAD-dependent glycerol-3-phosphate dehydrogenase family.

It is found in the cytoplasm. The catalysed reaction is sn-glycerol 3-phosphate + NAD(+) = dihydroxyacetone phosphate + NADH + H(+). The enzyme catalyses sn-glycerol 3-phosphate + NADP(+) = dihydroxyacetone phosphate + NADPH + H(+). The protein operates within membrane lipid metabolism; glycerophospholipid metabolism. Functionally, catalyzes the reduction of the glycolytic intermediate dihydroxyacetone phosphate (DHAP) to sn-glycerol 3-phosphate (G3P), the key precursor for phospholipid synthesis. The chain is Glycerol-3-phosphate dehydrogenase [NAD(P)+] from Aromatoleum aromaticum (strain DSM 19018 / LMG 30748 / EbN1) (Azoarcus sp. (strain EbN1)).